The following is a 498-amino-acid chain: ATP synthase subunit beta, chloroplastic (498 aa).

172-179 contacts ATP; the sequence is GGAGVGKT.

It belongs to the ATPase alpha/beta chains family. As to quaternary structure, F-type ATPases have 2 components, CF(1) - the catalytic core - and CF(0) - the membrane proton channel. CF(1) has five subunits: alpha(3), beta(3), gamma(1), delta(1), epsilon(1). CF(0) has four main subunits: a(1), b(1), b'(1) and c(9-12).

Its subcellular location is the plastid. It localises to the chloroplast thylakoid membrane. The catalysed reaction is ATP + H2O + 4 H(+)(in) = ADP + phosphate + 5 H(+)(out). Functionally, produces ATP from ADP in the presence of a proton gradient across the membrane. The catalytic sites are hosted primarily by the beta subunits. The chain is ATP synthase subunit beta, chloroplastic from Montinia caryophyllacea (Wild clove bush).